A 134-amino-acid chain; its full sequence is Syncollin (134 aa).

An N-terminal signal peptide occupies residues 1-21 (MSPLRPLLLALALASVPCAQG).

Monomer and homooligomer; most probably hexameric. Interacts with GP2. Post-translationally, contains intrachain disulfide bonds.

It localises to the zymogen granule membrane. Its subcellular location is the zymogen granule lumen. Functionally, functions in exocytosis in pancreatic acinar cells regulating the fusion of zymogen granules with each other. May have a pore-forming activity on membranes and regulate exocytosis in other exocrine tissues. This is Syncollin (SYCN) from Homo sapiens (Human).